Reading from the N-terminus, the 675-residue chain is Protein PALS1 (675 aa).

Disordered regions lie at residues 1 to 32 (MTTS…HPKH) and 52 to 79 (RSAQ…KQEL). The required for the correct localization of PALS1 and PATJ at cell-cell contacts and the normal formation of tight junctions and adherens junctions stretch occupies residues 1-345 (MTTSYMNGHV…QQIKPPPAKE (345 aa)). A phosphoserine mark is found at S14 and S25. Positions 21–140 (LGLASPEEHP…LKHIQHTLVD (120 aa)) are interaction with PARD6B. The span at 54-79 (AQLERIRQQQEDMRRRREEEGKKQEL) shows a compositional bias: basic and acidic residues. A phosphoserine mark is found at S83 and S84. L27 domains lie at 120 to 177 (KILE…NKAS) and 179 to 235 (PFPL…MQLE). The interaction with LIN7C stretch occupies residues 181–243 (PLIANVQDLV…LEPITDERVY (63 aa)). Residues 256–336 (IVRIEKARDI…TLTFVLIPSQ (81 aa)) form the PDZ domain. One can recognise an SH3 domain in the interval 345–417 (ETVIHVKAHF…PGKSFQQQRE (73 aa)). The region spanning 479-660 (KRPIILIGPQ…AYQELLRLIN (182 aa)) is the Guanylate kinase-like domain. An ATP-binding site is contributed by 486–493 (GPQNCGQN).

This sequence belongs to the MAGUK family. As to quaternary structure, heterodimer with MPP1. Forms a heterotrimeric complex composed of PALS1, LIN7B and PATJ; the N-terminal L27 domain of PALS1 interacts with the L27 domain of PATJ and the C-terminal L27 domain of PALS1 interacts with the L27 domain of LIN7B. Component of a complex composed of PALS1, CRB1 and MPP4. Component of a complex whose core is composed of ARHGAP17, AMOT, PALS1, PATJ and PARD3/PAR3. Component of a complex composed of PALS1, CRB1 and EPB41L5. Within the complex, interacts (via HOOK domain) with EPB41L5 (via FERM domain), and interacts with CRB1 (via intracellular domain). Component of a complex composed of PALS1, MPP3 and CRB1; PALS1 acts as a bridging protein between MPP3 (via guanylate kinase-like domain) and CRB1. Component of a complex composed of CRB3, PALS1 and PATJ. As part of the Crumbs complex; interacts with WWP1, the interaction is enhanced by AMOTL2 and facilitates WWP1 localization to the plasma membrane. The Crumbs complex promotes monoubiquitination of AMOTL2 by WWP1, which activates the Hippo signaling pathway. Interacts (via PDZ domain) with PATJ (via N-terminus). Interacts with EZR. Interacts (via PDZ domain) with CRB1 (via C-terminal ERLI motif). While the PDZ domain is sufficient for interaction with CRB1, the adjacent SH3 and guanylate kinase-like domains are likely to contribute to a high affinity interaction. Interacts with WWTR1/TAZ (via WW domain). Interacts with MPP7. Interacts (via PDZ domain) with CRB3 (via C-terminus). Interacts with LIN7C. Interacts with MPDZ. Interacts with PARD6B. Interacts with SC6A1. Interacts with CDH5; the interaction promotes PALS1 localization to cell junctions and is required for CDH5-mediated vascular lumen formation and endothelial cell. Interacts with NPHP1 (via coiled coil and SH3 domains). Interacts with NPHP4. Interacts with CRB2.

It is found in the golgi apparatus. It localises to the cell membrane. The protein localises to the endomembrane system. The protein resides in the cell junction. Its subcellular location is the tight junction. It is found in the adherens junction. It localises to the cell projection. The protein localises to the axon. The protein resides in the perikaryon. Its subcellular location is the apical cell membrane. Its function is as follows. Plays a role in tight junction biogenesis and in the establishment of cell polarity in epithelial cells. Also involved in adherens junction biogenesis by ensuring correct localization of the exocyst complex protein EXOC4/SEC8 which allows trafficking of adherens junction structural component CDH1 to the cell surface. Plays a role through its interaction with CDH5 in vascular lumen formation and endothelial membrane polarity. Required during embryonic and postnatal retinal development. Required for the maintenance of cerebellar progenitor cells in an undifferentiated proliferative state, preventing premature differentiation, and is required for cerebellar histogenesis, fissure formation, cerebellar layer organization and cortical development. Plays a role in neuronal progenitor cell survival, potentially via promotion of mTOR signaling. Plays a role in the radial and longitudinal extension of the myelin sheath in Schwann cells. May modulate SC6A1/GAT1-mediated GABA uptake by stabilizing the transporter. May play a role in the T-cell receptor-mediated activation of NF-kappa-B. Required for localization of EZR to the apical membrane of parietal cells and may play a role in the dynamic remodeling of the apical cytoskeleton. Required for the normal polarized localization of the vesicular marker STX4. Required for the correct trafficking of the myelin proteins PMP22 and MAG. Involved in promoting phosphorylation and cytoplasmic retention of transcriptional coactivators YAP1 and WWTR1/TAZ which leads to suppression of TGFB1-dependent transcription of target genes such as CCN2/CTGF, SERPINE1/PAI1, SNAI1/SNAIL1 and SMAD7. The sequence is that of Protein PALS1 from Rattus norvegicus (Rat).